The chain runs to 158 residues: NKG2-F type II integral membrane protein (158 aa).

The span at 1–12 (MNKQRGTYSEVS) shows a compositional bias: polar residues. The tract at residues 1 to 30 (MNKQRGTYSEVSLAQDPKRQQRKLKGNKSS) is disordered. Residues 1 to 74 (MNKQRGTYSE…LPPPERLTAE (74 aa)) are Cytoplasmic-facing. Residues 75–95 (VLGIICIVLMATVLKTIVLIP) form a helical membrane-spanning segment. At 96–158 (CIGVLEQNNF…VLQRTLICFL (63 aa)) the chain is on the extracellular side.

In terms of assembly, can form disulfide-bonded heterodimer with CD94. Natural killer cells.

The protein resides in the membrane. Functionally, may play a role as a receptor for the recognition of MHC class I HLA-E molecules by NK cells. In Pan troglodytes (Chimpanzee), this protein is NKG2-F type II integral membrane protein (KLRC4).